A 921-amino-acid chain; its full sequence is DNA ligase (921 aa).

NAD(+) contacts are provided by residues 90 to 94 (DAAYD), 139 to 140 (SL), and Glu-173. Lys-175 acts as the N6-AMP-lysine intermediate in catalysis. 4 residues coordinate NAD(+): Arg-196, Glu-235, Lys-360, and Lys-384. Residues Cys-481, Cys-484, Cys-500, and Cys-506 each coordinate Zn(2+). The interval 663–688 (EAAIESAETQGGAASETTGAPTGAEA) is disordered. In terms of domain architecture, BRCT spans 839–921 (SLPQTLAGKT…AQLLETGSID (83 aa)).

It belongs to the NAD-dependent DNA ligase family. LigA subfamily. Mg(2+) serves as cofactor. The cofactor is Mn(2+).

It catalyses the reaction NAD(+) + (deoxyribonucleotide)n-3'-hydroxyl + 5'-phospho-(deoxyribonucleotide)m = (deoxyribonucleotide)n+m + AMP + beta-nicotinamide D-nucleotide.. Functionally, DNA ligase that catalyzes the formation of phosphodiester linkages between 5'-phosphoryl and 3'-hydroxyl groups in double-stranded DNA using NAD as a coenzyme and as the energy source for the reaction. It is essential for DNA replication and repair of damaged DNA. This chain is DNA ligase, found in Bifidobacterium longum subsp. infantis (strain ATCC 15697 / DSM 20088 / JCM 1222 / NCTC 11817 / S12).